We begin with the raw amino-acid sequence, 240 residues long: Cell division protein FtsQ (240 aa).

The Cytoplasmic segment spans residues 1–7; the sequence is MTGPGLR. Residues 8 to 28 form a helical membrane-spanning segment; sequence LLAGMGLAGALVLGLSLWLHF. Topologically, residues 29 to 240 are periplasmic; it reads DPDQHLPIGS…EADNDGGNAR (212 aa). The region spanning 34 to 102 is the POTRA domain; it reads LPIGSIQITG…DTLEVHVTEP (69 aa).

This sequence belongs to the FtsQ/DivIB family. FtsQ subfamily. Part of a complex composed of FtsB, FtsL and FtsQ.

The protein localises to the cell inner membrane. Functionally, essential cell division protein. May link together the upstream cell division proteins, which are predominantly cytoplasmic, with the downstream cell division proteins, which are predominantly periplasmic. May control correct divisome assembly. This is Cell division protein FtsQ from Thioalkalivibrio sp. (strain K90mix).